A 432-amino-acid chain; its full sequence is Methylenetetrahydrofolate--tRNA-(uracil-5-)-methyltransferase TrmFO (432 aa).

FAD is bound at residue 7–12 (GAGLAG).

It belongs to the MnmG family. TrmFO subfamily. Requires FAD as cofactor.

It is found in the cytoplasm. The enzyme catalyses uridine(54) in tRNA + (6R)-5,10-methylene-5,6,7,8-tetrahydrofolate + NADH + H(+) = 5-methyluridine(54) in tRNA + (6S)-5,6,7,8-tetrahydrofolate + NAD(+). The catalysed reaction is uridine(54) in tRNA + (6R)-5,10-methylene-5,6,7,8-tetrahydrofolate + NADPH + H(+) = 5-methyluridine(54) in tRNA + (6S)-5,6,7,8-tetrahydrofolate + NADP(+). Catalyzes the folate-dependent formation of 5-methyl-uridine at position 54 (M-5-U54) in all tRNAs. The sequence is that of Methylenetetrahydrofolate--tRNA-(uracil-5-)-methyltransferase TrmFO from Anoxybacillus flavithermus (strain DSM 21510 / WK1).